Reading from the N-terminus, the 872-residue chain is Protein translocase subunit SecA (872 aa).

Residues glutamine 87, 105 to 109 (GEGKT), and aspartate 510 contribute to the ATP site. Zn(2+)-binding residues include cysteine 847, cysteine 849, cysteine 858, and cysteine 859.

It belongs to the SecA family. As to quaternary structure, monomer and homodimer. Part of the essential Sec protein translocation apparatus which comprises SecA, SecYEG and auxiliary proteins SecDF-YajC and YidC. Zn(2+) serves as cofactor.

It is found in the cell inner membrane. It localises to the cytoplasm. The enzyme catalyses ATP + H2O + cellular proteinSide 1 = ADP + phosphate + cellular proteinSide 2.. In terms of biological role, part of the Sec protein translocase complex. Interacts with the SecYEG preprotein conducting channel. Has a central role in coupling the hydrolysis of ATP to the transfer of proteins into and across the cell membrane, serving as an ATP-driven molecular motor driving the stepwise translocation of polypeptide chains across the membrane. The chain is Protein translocase subunit SecA from Aliarcobacter butzleri (strain RM4018) (Arcobacter butzleri).